The following is a 146-amino-acid chain: Hemoglobin subunit beta (146 aa).

Valine 1 bears the N-acetylvaline mark. The Globin domain occupies 2–146 (DLTAEEKAAV…VANALAHKYH (145 aa)). Position 44 is a phosphoserine (serine 44). An N6-acetyllysine modification is found at lysine 59. A heme b-binding site is contributed by histidine 63. N6-acetyllysine is present on lysine 82. Histidine 92 contacts heme b. S-nitrosocysteine is present on cysteine 93. N6-acetyllysine is present on lysine 144.

This sequence belongs to the globin family. In terms of assembly, heterotetramer of two alpha chains and two beta chains. Red blood cells.

In terms of biological role, involved in oxygen transport from the lung to the various peripheral tissues. The chain is Hemoglobin subunit beta (HBB) from Rhinoceros unicornis (Greater Indian rhinoceros).